Here is a 375-residue protein sequence, read N- to C-terminus: DNA replication and repair protein RecF (375 aa).

30–37 (GENAQGKT) contributes to the ATP binding site.

The protein belongs to the RecF family.

The protein resides in the cytoplasm. Its function is as follows. The RecF protein is involved in DNA metabolism; it is required for DNA replication and normal SOS inducibility. RecF binds preferentially to single-stranded, linear DNA. It also seems to bind ATP. The polypeptide is DNA replication and repair protein RecF (Latilactobacillus sakei subsp. sakei (strain 23K) (Lactobacillus sakei subsp. sakei)).